A 446-amino-acid chain; its full sequence is Sulfoquinovose isomerase (446 aa).

It belongs to the SqvD family.

It catalyses the reaction 6-sulfo-beta-D-quinovose = 6-deoxy-6-sulfo-D-fructose. Functionally, part of the sulfo-TAL (or sulfo-SFT) pathway, a D-sulfoquinovose degradation pathway that produces sulfolactate (SL). Catalyzes the isomerization of sulfoquinovose (SQ) to 6-deoxy-6-sulfo-D-fructose (SF). The chain is Sulfoquinovose isomerase from Priestia aryabhattai (Bacillus aryabhattai).